A 270-amino-acid polypeptide reads, in one-letter code: Basigin (270 aa).

An N-terminal signal peptide occupies residues 1–21 (MAAVLFALLALALLRAGGASA). The Ig-like C2-type domain maps to 22 to 103 (AAGTVTTSVQ…TGEATLTVDG (82 aa)). The Extracellular portion of the chain corresponds to 22-207 (AAGTVTTSVQ…VTLRVRSRLA (186 aa)). 2 cysteine pairs are disulfide-bonded: Cys-41–Cys-87 and Cys-126–Cys-185. Residues Asn-44, Asn-75, Asn-152, and Asn-186 are each glycosylated (N-linked (GlcNAc...) asparagine). Residues 105-203 (PRIKAVKKSE…DAAVVTLRVR (99 aa)) enclose the Ig-like V-type domain. A helical membrane pass occupies residues 208 to 228 (ALWPFLGIVAEVLVLVTVIFI). The Cytoplasmic portion of the chain corresponds to 229–270 (YEKRRKPDEVLDDEDAGAAPLKSSGHHVNDDKGKNVRQRNAS). Positions 239 to 270 (LDDEDAGAAPLKSSGHHVNDDKGKNVRQRNAS) are disordered. The residue at position 252 (Ser-252) is a Phosphoserine.

In terms of assembly, homooligomer. Interacts with VEGFA, KDR/VEGFR2, PPIA/CYPA, SLC1A3, SLC16A12, SLC16A11, ATP1B2, MAG, L1CAM and AJAP1. Interacts with PPIL2; regulates BSG transport to the cell membrane. Interacts with XKR8; promoting its localization at the cell membrane. Interacts with SLC16A3; interaction mediates SLC16A3 targeting to the plasma membrane. Interacts with SLC16A1; interaction mediates SLC16A1 targeting to the plasma membrane. Interacts with SLC16A6; this interaction mediates targeting to the plasma membrane.

It localises to the cell membrane. The protein resides in the endoplasmic reticulum membrane. It is found in the basolateral cell membrane. In terms of biological role, signaling receptor for cyclophilins, essential for PPIA/CYPA and PPIB/CYPB-dependent signaling related to chemotaxis and adhesion of immune cells. Plays an important role in targeting the monocarboxylate transporters SLC16A1/GLUT1, SLC16A3, SLC16A8, SLC16A11 and SLC16A12 to the plasma membrane. Acts as a coreceptor for vascular endothelial growth factor receptor 2 (KDR/VEGFR2) in endothelial cells enhancing its VEGFA-mediated activation and downstream signaling. Promotes angiogenesis through EPAS1/HIF2A-mediated up-regulation of VEGFA and KDR/VEGFR2 in endothelial cells. This is Basigin (BSG) from Oryctolagus cuniculus (Rabbit).